The sequence spans 751 residues: Semaphorin-3C (751 aa).

The first 20 residues, 1–20 (MAFRTICVLVGVFICSICVK), serve as a signal peptide directing secretion. The region spanning 28–511 (RVYLTFDELR…SNEGVSQVSL (484 aa)) is the Sema domain. N81 carries N-linked (GlcNAc...) asparagine glycosylation. A disulfide bond links C101 and C112. N-linked (GlcNAc...) asparagine glycosylation occurs at N123. C130 and C139 form a disulfide bridge. Residues N252 and N268 are each glycosylated (N-linked (GlcNAc...) asparagine). 2 cysteine pairs are disulfide-bonded: C266/C378 and C290/C338. Residue N465 is glycosylated (N-linked (GlcNAc...) asparagine). A disulfide bridge connects residues C514 and C532. Residues 571-655 (AYRNAAEIVQ…TENSFKQTIA (85 aa)) enclose the Ig-like C2-type domain. N585 and N586 each carry an N-linked (GlcNAc...) asparagine glycan. The cysteines at positions 643 and 709 are disulfide-linked. The span at 712–731 (TRQQHQQGDESQKMRGDYGK) shows a compositional bias: basic and acidic residues. The interval 712 to 751 (TRQQHQQGDESQKMRGDYGKLKALINSRKSRNRRNQLPES) is disordered.

Belongs to the semaphorin family. Interacts with PLXND1. In terms of tissue distribution, expressed intensely in the heart, skeletal muscle, colon, small intestine, ovary, testis, and prostate. Faint expression ubiquitously among other organs, including brain.

Its subcellular location is the secreted. Binds to plexin family members and plays an important role in the regulation of developmental processes. Required for normal cardiovascular development during embryogenesis. Functions as attractant for growing axons, and thereby plays an important role in axon growth and axon guidance. In Homo sapiens (Human), this protein is Semaphorin-3C (SEMA3C).